We begin with the raw amino-acid sequence, 417 residues long: Adrenocortical dysplasia protein homolog (417 aa).

Residues 11-13 (PWI) carry the PWI motif. Serine 25 is modified (phosphoserine). The segment at 156 to 245 (ESASSSAGLT…SSIDSSQKAQ (90 aa)) is interaction with POT1. 2 stretches are compositionally biased toward polar residues: residues 237–250 (SIDSSQKAQENPAS) and 259–292 (SGASVSLLSALPTSDPGQKDNSQPPPTVCSTSPR). The interval 237-309 (SIDSSQKAQE…PCSSTPSSPL (73 aa)) is disordered. The segment covering 296–309 (PSSTPCSSTPSSPL) has biased composition (low complexity). Phosphoserine occurs at positions 313 and 317. Lysine 348 is covalently cross-linked (Glycyl lysine isopeptide (Lys-Gly) (interchain with G-Cter in SUMO2)).

In terms of assembly, component of the shelterin complex (telosome) composed of TERF1, TERF2, TINF2, TERF2IP ACD and POT1. Forms heterodimers with POT1. Identified in a complex with POT1 and single-stranded telomeric DNA. Interacts with STN1 and TINF2.

It localises to the nucleus. The protein resides in the chromosome. The protein localises to the telomere. Its function is as follows. Component of the shelterin complex (telosome) that is involved in the regulation of telomere length and protection. Shelterin associates with arrays of double-stranded TTAGGG repeats added by telomerase and protects chromosome ends. Without its protective activity, telomeres are no longer hidden from the DNA damage surveillance and chromosome ends are inappropriately processed by DNA repair pathways. Promotes binding of POT1 to single-stranded telomeric DNA. Modulates the inhibitory effects of POT1 on telomere elongation. The ACD-POT1 heterodimer enhances telomere elongation by recruiting telomerase to telomeres and increasing its processivity. May play a role in organogenesis. The sequence is that of Adrenocortical dysplasia protein homolog from Rattus norvegicus (Rat).